A 164-amino-acid polypeptide reads, in one-letter code: 3-isopropylmalate dehydratase small subunit (164 aa).

It belongs to the LeuD family. LeuD type 2 subfamily. In terms of assembly, heterodimer of LeuC and LeuD.

It catalyses the reaction (2R,3S)-3-isopropylmalate = (2S)-2-isopropylmalate. Its pathway is amino-acid biosynthesis; L-leucine biosynthesis; L-leucine from 3-methyl-2-oxobutanoate: step 2/4. In terms of biological role, catalyzes the isomerization between 2-isopropylmalate and 3-isopropylmalate, via the formation of 2-isopropylmaleate. The sequence is that of 3-isopropylmalate dehydratase small subunit from Lachnospira eligens (strain ATCC 27750 / DSM 3376 / VPI C15-48 / C15-B4) (Eubacterium eligens).